The following is a 237-amino-acid chain: Ly6/PLAUR domain-containing protein 8 (237 aa).

The first 19 residues, methionine 1–serine 19, serve as a signal peptide directing secretion. N-linked (GlcNAc...) asparagine glycans are attached at residues asparagine 45, asparagine 73, asparagine 107, asparagine 118, asparagine 132, asparagine 172, asparagine 175, and asparagine 185. In terms of domain architecture, UPAR/Ly6 spans cysteine 125–alanine 176. Residue asparagine 215 is the site of GPI-anchor amidated asparagine attachment. Residues valine 216 to proline 237 constitute a propeptide, removed in mature form.

This sequence belongs to the CNF-like-inhibitor family. Highly N-glycosylated. Not O-glycosylated. Post-translationally, GPI-anchored. The GPI-anchor is cleaved, leading to secretion into the colonic lumen. Expressed in the large intestine. Preferentially expressed on the epithelial layer exposed to the lumen (at protein level).

It localises to the cell membrane. The protein localises to the secreted. Secreted protein specifically required to prevent invasion of Gram-negative bacteria in the inner mucus layer of the colon epithelium, a portion of the large intestine which is free of commensal microbiota. Prevents invasion of flagellated microbiota by binding to the flagellum of bacteria, such as P.mirabilis, thereby inhibiting bacterial motility in the intestinal lumen. Segregation of intestinal bacteria and epithelial cells in the colon is required to preserve intestinal homeostasis. The protein is Ly6/PLAUR domain-containing protein 8 of Homo sapiens (Human).